A 74-amino-acid polypeptide reads, in one-letter code: Protein SlyX homolog (74 aa).

The protein belongs to the SlyX family.

The sequence is that of Protein SlyX homolog from Neisseria meningitidis serogroup C (strain 053442).